Consider the following 625-residue polypeptide: Chaperone protein HtpG (625 aa).

Positions 1–341 (MEKKQFQAES…SEDLSLNISR (341 aa)) are a; substrate-binding. The segment at 342 to 551 (EMLQHDRQLK…DGEITLEMEK (210 aa)) is b. Residues 552-625 (VLQAMPDNQN…FSQNMCKVMV (74 aa)) are c.

It belongs to the heat shock protein 90 family. In terms of assembly, homodimer.

The protein resides in the cytoplasm. Functionally, molecular chaperone. Has ATPase activity. The sequence is that of Chaperone protein HtpG from Shouchella clausii (strain KSM-K16) (Alkalihalobacillus clausii).